A 177-amino-acid polypeptide reads, in one-letter code: Interleukin-19 (177 aa).

A signal peptide spans 1 to 24 (MKLQCVSLWLLGTILILCSVDNHG). 3 disulfide bridges follow: Cys-28–Cys-121, Cys-75–Cys-127, and Cys-76–Cys-129. A glycan (N-linked (GlcNAc...) asparagine) is linked at Asn-56. Asn-135 is a glycosylation site (N-linked (GlcNAc...) asparagine).

The protein belongs to the IL-10 family.

The protein localises to the secreted. Functionally, cytokine that functions as an anti-inflammatory and proangiogenic factor. Polarizes adaptive immunity to an anti-inflammatory phenotype through induction of T-helper 2 responses by both down-regulation of IFN-gamma and up-regulation of IL4 and IL13. Produced by osteocytes, stimulates granulopoiesis and neutrophil formation. Exerts its biological effect through a receptor complex consisting of a heterodimer of IL20RA and IL20RB. In turn, activates the Janus kinase (JAK) and signal transducer and activator of transcription (STAT) pathway, and importantly, STAT3. This is Interleukin-19 (IL19) from Homo sapiens (Human).